The following is a 171-amino-acid chain: Tetratricopeptide repeat protein 9C (171 aa).

3 TPR repeats span residues Ala-8–Leu-41, Thr-72–Asn-107, and Ala-108–Asp-141.

Belongs to the TTC9 family.

The sequence is that of Tetratricopeptide repeat protein 9C (Ttc9c) from Mus musculus (Mouse).